We begin with the raw amino-acid sequence, 499 residues long: Nuclear receptor-binding protein 2 (499 aa).

Positions 1–31 are disordered; that stretch reads MAAPEPAPRRGREREREDESEDESDILEESP. Residues 7 to 17 show a composition bias toward basic and acidic residues; that stretch reads APRRGRERERE. A compositionally biased stretch (acidic residues) spans 18–28; the sequence is DESEDESDILE. The 269-residue stretch at 36-304 folds into the Protein kinase domain; that stretch reads QKRREQVNQG…AHNLLFHRVL (269 aa). The tract at residues 396 to 416 is disordered; sequence APPPEEAQKAKTPTPEPFDSE. 2 positions are modified to phosphothreonine: T407 and T409.

Belongs to the protein kinase superfamily. Ser/Thr protein kinase family. Expressed in Purkinje cells of the cerebellum and neurons in the CA3 region of the hippocampus. Also detected in non-neural tissues including mesenchymal layer adjacent to epithelium in developing bronchi of the lung, the epithelium of the stomach as well as cells in the liver.

The protein resides in the cytoplasm. In terms of biological role, may regulate apoptosis of neural progenitor cells during their differentiation. The sequence is that of Nuclear receptor-binding protein 2 from Mus musculus (Mouse).